Here is a 135-residue protein sequence, read N- to C-terminus: Large ribosomal subunit protein bL17 (135 aa).

It belongs to the bacterial ribosomal protein bL17 family. Part of the 50S ribosomal subunit. Contacts protein L32.

The protein is Large ribosomal subunit protein bL17 of Listeria monocytogenes serotype 4b (strain CLIP80459).